The chain runs to 129 residues: Phosphoribosyl-AMP cyclohydrolase (129 aa).

Asp-78 serves as a coordination point for Mg(2+). Cys-79 contacts Zn(2+). Residues Asp-80 and Asp-82 each coordinate Mg(2+). Zn(2+)-binding residues include Cys-96 and Cys-103.

It belongs to the PRA-CH family. In terms of assembly, homodimer. Mg(2+) serves as cofactor. It depends on Zn(2+) as a cofactor.

It is found in the cytoplasm. The catalysed reaction is 1-(5-phospho-beta-D-ribosyl)-5'-AMP + H2O = 1-(5-phospho-beta-D-ribosyl)-5-[(5-phospho-beta-D-ribosylamino)methylideneamino]imidazole-4-carboxamide. The protein operates within amino-acid biosynthesis; L-histidine biosynthesis; L-histidine from 5-phospho-alpha-D-ribose 1-diphosphate: step 3/9. Its function is as follows. Catalyzes the hydrolysis of the adenine ring of phosphoribosyl-AMP. This is Phosphoribosyl-AMP cyclohydrolase from Nitrosomonas europaea (strain ATCC 19718 / CIP 103999 / KCTC 2705 / NBRC 14298).